A 485-amino-acid chain; its full sequence is Glutamate--tRNA ligase (485 aa).

Positions 11-21 (PSPTGLLHIGN) match the 'HIGH' region motif. The 'KMSKS' region motif lies at 255-259 (KLSKR). ATP is bound at residue lysine 258.

Belongs to the class-I aminoacyl-tRNA synthetase family. Glutamate--tRNA ligase type 1 subfamily. Monomer.

The protein localises to the cytoplasm. The catalysed reaction is tRNA(Glu) + L-glutamate + ATP = L-glutamyl-tRNA(Glu) + AMP + diphosphate. Functionally, catalyzes the attachment of glutamate to tRNA(Glu) in a two-step reaction: glutamate is first activated by ATP to form Glu-AMP and then transferred to the acceptor end of tRNA(Glu). The protein is Glutamate--tRNA ligase of Streptococcus mutans serotype c (strain ATCC 700610 / UA159).